The sequence spans 314 residues: DNA-directed RNA polymerase subunit alpha (314 aa).

The tract at residues methionine 1–threonine 228 is alpha N-terminal domain (alpha-NTD). Positions lysine 245 to aspartate 314 are alpha C-terminal domain (alpha-CTD).

It belongs to the RNA polymerase alpha chain family. Homodimer. The RNAP catalytic core consists of 2 alpha, 1 beta, 1 beta' and 1 omega subunit. When a sigma factor is associated with the core the holoenzyme is formed, which can initiate transcription.

The enzyme catalyses RNA(n) + a ribonucleoside 5'-triphosphate = RNA(n+1) + diphosphate. In terms of biological role, DNA-dependent RNA polymerase catalyzes the transcription of DNA into RNA using the four ribonucleoside triphosphates as substrates. This Limosilactobacillus reuteri (strain DSM 20016) (Lactobacillus reuteri) protein is DNA-directed RNA polymerase subunit alpha.